A 975-amino-acid polypeptide reads, in one-letter code: Cation-chloride cotransporter 1 (975 aa).

Disordered stretches follow at residues 1–29 (MDSGDIEEAGGNGEEEFRSGPRLGGSKYR) and 104–124 (EQIQAPSSPRDGEDISITQGH). Residues 1–132 (MDSGDIEEAG…GHPKPPALKM (132 aa)) lie on the Cytoplasmic side of the membrane. Residues 133–153 (GTMMGVFVPCLQNILGIIYYI) traverse the membrane as a helical segment. The Extracellular segment spans residues 154–167 (RFTWIVGMAGIGQG). The chain crosses the membrane as a helical span at residues 168-188 (LVLVFLCGLCTFLTTISLSAI). Over 189-214 (ATNGAMKGGGPYYLIGRALGPEVGIS) the chain is Cytoplasmic. The helical transmembrane segment at 215-235 (IGLCFFLGNAVAGALYVLGAV) threads the bilayer. The Extracellular portion of the chain corresponds to 236–273 (ETFLKAFPAAGIFRETITKVNGTAVSESIQSPNSHDLQ). Residue Asn-256 is glycosylated (N-linked (GlcNAc...) asparagine). A helical membrane pass occupies residues 274–294 (VYGIVVTILLCFIVFGGVKMI). At 295-296 (NR) the chain is on the cytoplasmic side. The helical transmembrane segment at 297–317 (VAPAFLVPVLLSIFCIFIGIF) threads the bilayer. At 318-359 (LAKTDDPDNGITGLRLKSFKDNWGSAYQMTNDAGIPDPTGGT) the chain is on the extracellular side. The chain crosses the membrane as a helical span at residues 360–380 (YWSFNELVGLFFPAVTGIMAG). The Cytoplasmic portion of the chain corresponds to 381-398 (SNRSASLKDTQKSIPVGT). The chain crosses the membrane as a helical span at residues 399–419 (LAATLTTTSLYLISVLFFGAV). Over 420-434 (ATRDKLLTDRLLTAT) the chain is Extracellular. Residues 435–455 (IAWPFPAIVHVGIILSTLGAA) form a helical membrane-spanning segment. Over 456-490 (LQSLTGAPRLLAAIANDDILPILNYFKVADTSEPH) the chain is Cytoplasmic. The helical transmembrane segment at 491 to 511 (IATLFTAFICIGCVVIGNLDL) threads the bilayer. At 512 to 515 (ITPT) the chain is on the extracellular side. Residues 516 to 536 (VTMFYLLCYSGVNLSCFLLDL) traverse the membrane as a helical segment. At 537–544 (LDAPSWRP) the chain is on the cytoplasmic side. A helical membrane pass occupies residues 545 to 565 (RWKYHHWSLSFVGASLCIVIM). Topologically, residues 566–571 (FLISWS) are extracellular. A helical membrane pass occupies residues 572–592 (FTVVAIALASLIYKYVGLKGK). The Cytoplasmic portion of the chain corresponds to 593–975 (AGDWGDGFKS…YHRDVVTLFT (383 aa)).

It belongs to the SLC12A transporter family. As to expression, expressed in young seedlings cotyledon tips, plant vasculature, root tips and axillary buds. Expressed in root vascular strand in the pericycle and other parenchyma cells bordering xylem vessels. Expressed in the xylem/symplast boundaries of rosette stems, rosette leaves and cauline leaves. Expressed in stipules, trichomes and hydathodes. Expressed in pollen grains.

The protein resides in the membrane. Its function is as follows. Cation/chloride cotransporter that mediates potassium-chloride and sodium-chloride cotransports. Involved in plant development and Cl(-) homeostasis. May be involved in long distance Cl(-) transport. Does not function as an H(+)-dependent cotransporter. The protein is Cation-chloride cotransporter 1 (CCC1) of Arabidopsis thaliana (Mouse-ear cress).